A 209-amino-acid chain; its full sequence is Large ribosomal subunit protein uL3 (209 aa).

Residue glutamine 150 is modified to N5-methylglutamine.

The protein belongs to the universal ribosomal protein uL3 family. Part of the 50S ribosomal subunit. Forms a cluster with proteins L14 and L19. Post-translationally, methylated by PrmB.

Functionally, one of the primary rRNA binding proteins, it binds directly near the 3'-end of the 23S rRNA, where it nucleates assembly of the 50S subunit. In Buchnera aphidicola subsp. Schizaphis graminum (strain Sg), this protein is Large ribosomal subunit protein uL3.